The chain runs to 396 residues: S-adenosylmethionine synthase (396 aa).

His16 is a binding site for ATP. Residue Asp18 participates in Mg(2+) binding. A K(+)-binding site is contributed by Glu44. Residues Glu57 and Gln100 each coordinate L-methionine. The tract at residues 100-110 (QSPDINQGVDR) is flexible loop. Residues 165-167 (DAK), Asp240, 246-247 (RK), Ala263, and Lys267 contribute to the ATP site. An L-methionine-binding site is contributed by Asp240. Lys271 is a binding site for L-methionine.

This sequence belongs to the AdoMet synthase family. As to quaternary structure, homotetramer; dimer of dimers. Mg(2+) is required as a cofactor. It depends on K(+) as a cofactor.

Its subcellular location is the cytoplasm. It carries out the reaction L-methionine + ATP + H2O = S-adenosyl-L-methionine + phosphate + diphosphate. Its pathway is amino-acid biosynthesis; S-adenosyl-L-methionine biosynthesis; S-adenosyl-L-methionine from L-methionine: step 1/1. In terms of biological role, catalyzes the formation of S-adenosylmethionine (AdoMet) from methionine and ATP. The overall synthetic reaction is composed of two sequential steps, AdoMet formation and the subsequent tripolyphosphate hydrolysis which occurs prior to release of AdoMet from the enzyme. In Pseudomonas fluorescens (strain ATCC BAA-477 / NRRL B-23932 / Pf-5), this protein is S-adenosylmethionine synthase.